Reading from the N-terminus, the 292-residue chain is Hydroxysqualene synthase (292 aa).

It belongs to the phytoene/squalene synthase family. HpnC subfamily.

The catalysed reaction is presqualene diphosphate + H2O = hydroxysqualene + diphosphate. It participates in secondary metabolite biosynthesis; hopanoid biosynthesis. In terms of biological role, involved in the biosynthesis of the hopanoid precursor squalene (SQ) from farnesyl diphosphate (FPP). Catalyzes the second step, the conversion of presqualene diphosphate (PSPP) to hydroxysqualene (HSQ). The sequence is that of Hydroxysqualene synthase from Sinorhizobium fredii (strain NBRC 101917 / NGR234).